Consider the following 329-residue polypeptide: Mas-related G-protein coupled receptor member X2 (329 aa).

Residues 1–33 (MDPTTPAWGTESTTMNGNDQALPLFCGKETLIS) lie on the Extracellular side of the membrane. The helical transmembrane segment at 34–54 (VFLILFIALVGLVGNGFVLWL) threads the bilayer. The Cytoplasmic portion of the chain corresponds to 55–63 (LGFRMRKNA). A helical transmembrane segment spans residues 64–84 (FSVYVLSLAGADFLFLCFQII). At 85-96 (NCLVYLSNVFCS) the chain is on the extracellular side. A helical transmembrane segment spans residues 97-117 (ISINFPSFFITVMTCAYLAGL). Residues 118–144 (SMLSTISTERCLSVLWPIWYRCRRPRH) lie on the Cytoplasmic side of the membrane. Residues 145–165 (LSAVACVLLWALSLLLSILEG) traverse the membrane as a helical segment. Residues 166–183 (KFCGLFGDGDSGWCQTFD) are Extracellular-facing. The helical transmembrane segment at 184-204 (LITAAWLIFLFMVLCGSSLAL) threads the bilayer. Residues 205–227 (LVRILCGSRGLPLTRLYLTILLT) lie on the Cytoplasmic side of the membrane. The chain crosses the membrane as a helical span at residues 228 to 248 (VLVFLLCGLPFGIQWFLILWI). Residues 249–263 (WKNSDVLFCHIHPVS) are Extracellular-facing. Residues 264–284 (VVLSSLNSSANPIIYFFVGSF) form a helical membrane-spanning segment. Topologically, residues 285-329 (RKQWRLQQPILKLALQRALQDIAEVDHSEGCFRQGTPEMSRSSLV) are cytoplasmic.

Belongs to the G-protein coupled receptor 1 family. Mas subfamily.

It is found in the cell membrane. Functionally, mast cell-specific receptor for basic secretagogues, i.e. cationic amphiphilic drugs, as well as endo- or exogenous peptides, consisting of a basic head group and a hydrophobic core. Recognizes and binds small molecules containing a cyclized tetrahydroisoquinoline (THIQ), such as non-steroidal neuromuscular blocking drugs (NMBDs), including tubocurarine and atracurium. In response to these compounds, mediates pseudo-allergic reactions characterized by histamine release, inflammation and airway contraction. The sequence is that of Mas-related G-protein coupled receptor member X2 (MRGPRX2) from Pan troglodytes (Chimpanzee).